A 304-amino-acid polypeptide reads, in one-letter code: Small ribosomal subunit biogenesis GTPase RsgA (304 aa).

The CP-type G domain occupies 78-237; sequence HSFLTRPPVA…VADTPGFNRP (160 aa). GTP-binding positions include 127–130 and 179–187; these read TKTD and GPSGVGKSS. Positions 262, 267, 269, and 275 each coordinate Zn(2+).

Belongs to the TRAFAC class YlqF/YawG GTPase family. RsgA subfamily. Monomer. Associates with 30S ribosomal subunit, binds 16S rRNA. Requires Zn(2+) as cofactor.

It is found in the cytoplasm. In terms of biological role, one of several proteins that assist in the late maturation steps of the functional core of the 30S ribosomal subunit. Helps release RbfA from mature subunits. May play a role in the assembly of ribosomal proteins into the subunit. Circularly permuted GTPase that catalyzes slow GTP hydrolysis, GTPase activity is stimulated by the 30S ribosomal subunit. The sequence is that of Small ribosomal subunit biogenesis GTPase RsgA from Synechococcus sp. (strain CC9605).